The sequence spans 428 residues: D-amino acid dehydrogenase (428 aa).

An FAD-binding site is contributed by 3–17 (VVILGSGVVGVASAY).

The protein belongs to the DadA oxidoreductase family. FAD serves as cofactor.

It carries out the reaction a D-alpha-amino acid + A + H2O = a 2-oxocarboxylate + AH2 + NH4(+). It functions in the pathway amino-acid degradation; D-alanine degradation; NH(3) and pyruvate from D-alanine: step 1/1. Oxidative deamination of D-amino acids. The chain is D-amino acid dehydrogenase from Burkholderia pseudomallei (strain 1106a).